The following is a 550-amino-acid chain: Kinase suppressor of Ras B (550 aa).

2 stretches are compositionally biased toward low complexity: residues 21-56 (SFSS…SNPI) and 63-75 (ATSS…STSS). Positions 21 to 87 (SFSSWRRSST…PPPASAPPRI (67 aa)) are disordered. The Phorbol-ester/DAG-type zinc-finger motif lies at 90 to 145 (YHKMVPSKSKFRQCDVCEHIFIFDFVRKQHLDDVYACNVCGIRVHKGCLDRVKNDC). The tract at residues 172–196 (TTASISKSLTTSPTCSTSTTMSPAG) is disordered. The span at 177–193 (SKSLTTSPTCSTSTTMS) shows a compositional bias: low complexity. Positions 248–528 (VDVMTKIGDG…FQQIVKRITV (281 aa)) constitute a Protein kinase domain. The disordered stretch occupies residues 530 to 550 (MPRKESNKQKRRSTAHENPLF).

Belongs to the protein kinase superfamily. TKL Ser/Thr protein kinase family. Interacts with ndk-1.

Functionally, probable inactive protein kinase which positively regulates Ras-mediated signaling probably acting at the level of let-60/ras or/and lin-45/raf. In the germline, regulates meiotic progression during oogenesis and mpk-1 (isoform b) phosphorylation. Plays a role in meiotic recombination events. Functions redundantly with ksr-1 in the Ras-mediated regulation of larval survival, the development of excretory canal, in determining vulval precursor cell fate during vulval induction and in mpk-1 phosphorylation in somatic cells. The protein is Kinase suppressor of Ras B of Caenorhabditis elegans.